Reading from the N-terminus, the 364-residue chain is N-acetyl-gamma-glutamyl-phosphate reductase (364 aa).

The active site involves Cys157.

This sequence belongs to the NAGSA dehydrogenase family. Type 1 subfamily.

Its subcellular location is the cytoplasm. It carries out the reaction N-acetyl-L-glutamate 5-semialdehyde + phosphate + NADP(+) = N-acetyl-L-glutamyl 5-phosphate + NADPH + H(+). Its pathway is amino-acid biosynthesis; L-arginine biosynthesis; N(2)-acetyl-L-ornithine from L-glutamate: step 3/4. Catalyzes the NADPH-dependent reduction of N-acetyl-5-glutamyl phosphate to yield N-acetyl-L-glutamate 5-semialdehyde. This chain is N-acetyl-gamma-glutamyl-phosphate reductase, found in Bifidobacterium animalis subsp. lactis (strain AD011).